We begin with the raw amino-acid sequence, 198 residues long: HTH-type transcriptional regulator BetI (198 aa).

An HTH tetR-type domain is found at 8-68; the sequence is PIRRQQLIEA…ATMRYLIRHL (61 aa). Positions 31-50 form a DNA-binding region, H-T-H motif; it reads SIAQIAKRAGVSNGIISHYF.

The protein operates within amine and polyamine biosynthesis; betaine biosynthesis via choline pathway [regulation]. In terms of biological role, repressor involved in the biosynthesis of the osmoprotectant glycine betaine. It represses transcription of the choline transporter BetT and the genes of BetAB involved in the synthesis of glycine betaine. In Yersinia pseudotuberculosis serotype O:1b (strain IP 31758), this protein is HTH-type transcriptional regulator BetI.